Consider the following 289-residue polypeptide: uncharacterized protein (289 aa).

Residues 1–58 (MDEKDWILLKILHEEQSVTKTAERLFTSQPSITYRLKKIEEIFGIELFTKRHKGITFT) enclose the HTH lysR-type domain. Residues 18–37 (VTKTAERLFTSQPSITYRLK) constitute a DNA-binding region (H-T-H motif).

It belongs to the LysR transcriptional regulatory family.

This is an uncharacterized protein from Bacillus subtilis (strain 168).